A 327-amino-acid polypeptide reads, in one-letter code: Ribose-phosphate pyrophosphokinase (327 aa).

Residues 46–48 (NGE) and 105–106 (RQ) each bind ATP. 2 residues coordinate Mg(2+): His-139 and Asp-179. The active site involves Lys-203. Residues Arg-205, Asp-231, and 235–239 (DTGGT) each bind D-ribose 5-phosphate.

This sequence belongs to the ribose-phosphate pyrophosphokinase family. Class I subfamily. In terms of assembly, homohexamer. Requires Mg(2+) as cofactor.

It is found in the cytoplasm. It carries out the reaction D-ribose 5-phosphate + ATP = 5-phospho-alpha-D-ribose 1-diphosphate + AMP + H(+). It functions in the pathway metabolic intermediate biosynthesis; 5-phospho-alpha-D-ribose 1-diphosphate biosynthesis; 5-phospho-alpha-D-ribose 1-diphosphate from D-ribose 5-phosphate (route I): step 1/1. In terms of biological role, involved in the biosynthesis of the central metabolite phospho-alpha-D-ribosyl-1-pyrophosphate (PRPP) via the transfer of pyrophosphoryl group from ATP to 1-hydroxyl of ribose-5-phosphate (Rib-5-P). The polypeptide is Ribose-phosphate pyrophosphokinase (Mycobacterium leprae (strain TN)).